A 259-amino-acid chain; its full sequence is Cytochrome c oxidase subunit 3 (259 aa).

7 consecutive transmembrane segments (helical) span residues 13–33 (PWPL…TSWF), 36–56 (HGFI…FQWW), 80–100 (GMVL…WAYF), 125–145 (FQIP…VTWA), 154–174 (HAEA…FTLL), 195–215 (FFVA…FLLI), and 237–257 (AWYW…IYWW).

Belongs to the cytochrome c oxidase subunit 3 family. As to quaternary structure, component of the cytochrome c oxidase (complex IV, CIV), a multisubunit enzyme composed of a catalytic core of 3 subunits and several supernumerary subunits. The complex exists as a monomer or a dimer and forms supercomplexes (SCs) in the inner mitochondrial membrane with ubiquinol-cytochrome c oxidoreductase (cytochrome b-c1 complex, complex III, CIII).

The protein localises to the mitochondrion inner membrane. It catalyses the reaction 4 Fe(II)-[cytochrome c] + O2 + 8 H(+)(in) = 4 Fe(III)-[cytochrome c] + 2 H2O + 4 H(+)(out). Component of the cytochrome c oxidase, the last enzyme in the mitochondrial electron transport chain which drives oxidative phosphorylation. The respiratory chain contains 3 multisubunit complexes succinate dehydrogenase (complex II, CII), ubiquinol-cytochrome c oxidoreductase (cytochrome b-c1 complex, complex III, CIII) and cytochrome c oxidase (complex IV, CIV), that cooperate to transfer electrons derived from NADH and succinate to molecular oxygen, creating an electrochemical gradient over the inner membrane that drives transmembrane transport and the ATP synthase. Cytochrome c oxidase is the component of the respiratory chain that catalyzes the reduction of oxygen to water. Electrons originating from reduced cytochrome c in the intermembrane space (IMS) are transferred via the dinuclear copper A center (CU(A)) of subunit 2 and heme A of subunit 1 to the active site in subunit 1, a binuclear center (BNC) formed by heme A3 and copper B (CU(B)). The BNC reduces molecular oxygen to 2 water molecules using 4 electrons from cytochrome c in the IMS and 4 protons from the mitochondrial matrix. The chain is Cytochrome c oxidase subunit 3 (COIII) from Heterololigo bleekeri (Spear squid).